Reading from the N-terminus, the 623-residue chain is Chaperone protein DnaK (623 aa).

Thr175 carries the post-translational modification Phosphothreonine; by autocatalysis. The tract at residues 580 to 623 (PEGAQGAGFDPNNMGGANAGNASAENDKKDDNVVDADYKVEDDK) is disordered. Residues 591–603 (NNMGGANAGNASA) are compositionally biased toward low complexity. Basic and acidic residues predominate over residues 604-623 (ENDKKDDNVVDADYKVEDDK).

It belongs to the heat shock protein 70 family.

Functionally, acts as a chaperone. This Clostridium botulinum (strain Okra / Type B1) protein is Chaperone protein DnaK.